Reading from the N-terminus, the 139-residue chain is Cuticle protein 76 (139 aa).

Repeat copies occupy residues 7 to 10 (AAPA), 68 to 71 (AAPA), 75 to 78 (AAPV), 93 to 95 (AAP), 105 to 108 (AAPA), and 121 to 124 (AAPA).

Component of the cuticle of migratory locust which contains more than 100 different structural proteins. In Locusta migratoria (Migratory locust), this protein is Cuticle protein 76.